A 217-amino-acid polypeptide reads, in one-letter code: Somatotropin (217 aa).

Positions M1–A26 are cleaved as a signal peptide. H44 contacts Zn(2+). C79 and C191 are disulfide-bonded. S132 is subject to Phosphoserine. E200 provides a ligand contact to Zn(2+). C208 and C215 form a disulfide bridge.

Belongs to the somatotropin/prolactin family.

Its subcellular location is the secreted. Functionally, plays an important role in growth control. Its major role in stimulating body growth is to stimulate the liver and other tissues to secrete IGF1. It stimulates both the differentiation and proliferation of myoblasts. It also stimulates amino acid uptake and protein synthesis in muscle and other tissues. This Pan troglodytes (Chimpanzee) protein is Somatotropin (GH1).